The chain runs to 422 residues: MEADPSLVSYADQHGEWETREISIFGVVKSFISQLSIGQELTKVSMPSIFLMPYSILELAASRHLKYIHLLISAQHEEDPLKRMAIIIQYFFSCVRDGNFQKKPYNALLGEVHKCFVKYPSYDGQSTSTAQFIGEQVTHHPPLTAFNITTSEGITLDCNVQFSAKFHMNSVSVVTTGAVKICIPVKVGNQIIKETYIIDKGLPDALVKNVIFGTRSIYWTDSVDIMCEDSKTSATVHFDKNEYVKGEVSVYNTELEVEEHRASLKGYISDVVNIDYLESKSSEAAPASSASKKEKKKEKKKAKHSKHTCSPSDTILMDTKQLEPNSTLYPKQTDPITSLGTWKEVTKQIVAGDMQAADQIKKEIEDEQRKRLQITKEEEKKERAYFKYNDDKEIWEFKSTQTLAPVSNSTSSTASDAASGSN.

Positions Glu-283–Asp-313 are disordered. The span at Lys-293–His-307 shows a compositional bias: basic residues. Positions Met-354 to Ala-384 form a coiled coil. A disordered region spans residues Thr-402–Asn-422. Over residues Ser-407–Asn-422 the composition is skewed to low complexity.

It belongs to the OSBP family.

This is Oxysterol-binding protein 7 (osbG) from Dictyostelium discoideum (Social amoeba).